We begin with the raw amino-acid sequence, 362 residues long: Probable dual-specificity RNA methyltransferase RlmN (362 aa).

The active-site Proton acceptor is glutamate 99. In terms of domain architecture, Radical SAM core spans serine 105–serine 341. Cysteine 112 and cysteine 346 form a disulfide bridge. [4Fe-4S] cluster contacts are provided by cysteine 119, cysteine 123, and cysteine 126. Residues glycine 171 to glutamate 172, serine 204, serine 227 to histidine 229, and asparagine 303 each bind S-adenosyl-L-methionine. The active-site S-methylcysteine intermediate is cysteine 346.

It belongs to the radical SAM superfamily. RlmN family. [4Fe-4S] cluster is required as a cofactor.

It localises to the cytoplasm. It carries out the reaction adenosine(2503) in 23S rRNA + 2 reduced [2Fe-2S]-[ferredoxin] + 2 S-adenosyl-L-methionine = 2-methyladenosine(2503) in 23S rRNA + 5'-deoxyadenosine + L-methionine + 2 oxidized [2Fe-2S]-[ferredoxin] + S-adenosyl-L-homocysteine. The catalysed reaction is adenosine(37) in tRNA + 2 reduced [2Fe-2S]-[ferredoxin] + 2 S-adenosyl-L-methionine = 2-methyladenosine(37) in tRNA + 5'-deoxyadenosine + L-methionine + 2 oxidized [2Fe-2S]-[ferredoxin] + S-adenosyl-L-homocysteine. Its function is as follows. Specifically methylates position 2 of adenine 2503 in 23S rRNA and position 2 of adenine 37 in tRNAs. The sequence is that of Probable dual-specificity RNA methyltransferase RlmN from Chlorobium phaeobacteroides (strain BS1).